We begin with the raw amino-acid sequence, 356 residues long: Phosphoribosyl pyrophosphate synthase-associated protein 1 (356 aa).

Residue Met-1 is modified to N-acetylmethionine. Asn-2 is subject to N-acetylproline. Phosphoserine occurs at positions 177 and 215.

This sequence belongs to the ribose-phosphate pyrophosphokinase family. As to quaternary structure, binds to PRPS1 and PRPS2. As to expression, ubiquitous.

In terms of biological role, seems to play a negative regulatory role in 5-phosphoribose 1-diphosphate synthesis. This chain is Phosphoribosyl pyrophosphate synthase-associated protein 1 (PRPSAP1), found in Homo sapiens (Human).